A 220-amino-acid polypeptide reads, in one-letter code: Uracil-DNA glycosylase (220 aa).

Asp65 acts as the Proton acceptor in catalysis.

It belongs to the uracil-DNA glycosylase (UDG) superfamily. UNG family.

It is found in the cytoplasm. The enzyme catalyses Hydrolyzes single-stranded DNA or mismatched double-stranded DNA and polynucleotides, releasing free uracil.. In terms of biological role, excises uracil residues from the DNA which can arise as a result of misincorporation of dUMP residues by DNA polymerase or due to deamination of cytosine. This is Uracil-DNA glycosylase from Leuconostoc mesenteroides subsp. mesenteroides (strain ATCC 8293 / DSM 20343 / BCRC 11652 / CCM 1803 / JCM 6124 / NCDO 523 / NBRC 100496 / NCIMB 8023 / NCTC 12954 / NRRL B-1118 / 37Y).